Reading from the N-terminus, the 171-residue chain is Calcium channel flower homolog (171 aa).

Residues 1-31 (MSGSVAAGAAAGPVPPAQEEGMTWWYRWLCR) are Cytoplasmic-facing. Residues 32 to 52 (LAGVLGAVSCAISGLFNCVTI) form a helical membrane-spanning segment. The Extracellular segment spans residues 53-56 (HPLN). Residues 57-77 (IAAGVWMIMNAFILLLCEAPF) traverse the membrane as a helical segment. Over 78-101 (CCQFVEFANTVAEKVDRLRSWQKA) the chain is Cytoplasmic. Residues 102–122 (VFYCGMAIVPIVMSLTLTTLL) traverse the membrane as a helical segment. Over 123–124 (GN) the chain is Extracellular. Residues 125-141 (AIAFATGVLYGLSALGK) form a helical membrane-spanning segment. Residues 142–171 (KGDAISYARIQQQRQQADEEKLAETFEGEL) are Cytoplasmic-facing.

This sequence belongs to the calcium channel flower family. In terms of assembly, interacts with adaptor protein complex 2 (AP-2). In terms of tissue distribution, expressed in calyces in the brain (at protein level). Detected in cultured hippocampal neurons (at protein level).

It localises to the cell membrane. Its subcellular location is the cytoplasmic vesicle. The protein resides in the secretory vesicle. It is found in the synaptic vesicle. The protein localises to the golgi apparatus. It localises to the vesicle. In terms of biological role, transmembrane protein which mediates synaptic endocytosis and fitness-based cell culling. In response to different stimulus strengths, controls two major modes of synaptic vesicle (SV) retrieval in hippocampal neurons; Clathrin-mediated endocytosis (CME) in response to mild stimulation and activity-dependent bulk endocytosis (ADBE) in response to strong stimulation. In cytotoxic T-lymphoocytes (CTLs) facilitates calcium-dependent endocytosis of cytotoxic granules (CGs) at the immuno synapse. Different isoforms work as fitness fingerprints in 'loser' and 'winner' cells and thereby mediate win/lose decisions as part of the cell competition process. The polypeptide is Calcium channel flower homolog (Cacfd1) (Rattus norvegicus (Rat)).